The sequence spans 112 residues: Outer membrane protein assembly factor BamE (112 aa).

The first 19 residues, 1-19, serve as a signal peptide directing secretion; sequence MRCKTLTAAAAVLLMLTAG. C20 is lipidated: N-palmitoyl cysteine. The S-diacylglycerol cysteine moiety is linked to residue C20.

It belongs to the BamE family. In terms of assembly, part of the Bam complex, which is composed of the outer membrane protein BamA, and four lipoproteins BamB, BamC, BamD and BamE.

It is found in the cell outer membrane. In terms of biological role, part of the outer membrane protein assembly complex, which is involved in assembly and insertion of beta-barrel proteins into the outer membrane. This chain is Outer membrane protein assembly factor BamE, found in Salmonella typhimurium (strain LT2 / SGSC1412 / ATCC 700720).